The chain runs to 255 residues: Tabinhibitin 1 (255 aa).

The signal sequence occupies residues 1–23 (MTSILVSRFLIAALVLQYATSDA). An SCP domain is found at 67-211 (LSKINDVRDH…KARALLTCNF (145 aa)).

It belongs to the CRISP family. As to expression, expressed in salivary glands.

The protein resides in the secreted. Functionally, inhibits platelet aggregation induced by all agonists tested. May act by competing with fibrinogen for binding to glycoprotein IIb/IIIa (ITGA2B/ITGB3). The protein is Tabinhibitin 1 of Tabanus yao (Horsefly).